A 246-amino-acid chain; its full sequence is tRNA pseudouridine synthase A (246 aa).

Aspartate 52 functions as the Nucleophile in the catalytic mechanism. Tyrosine 111 is a binding site for substrate.

This sequence belongs to the tRNA pseudouridine synthase TruA family. In terms of assembly, homodimer.

It carries out the reaction uridine(38/39/40) in tRNA = pseudouridine(38/39/40) in tRNA. In terms of biological role, formation of pseudouridine at positions 38, 39 and 40 in the anticodon stem and loop of transfer RNAs. The protein is tRNA pseudouridine synthase A of Borreliella afzelii (strain PKo) (Borrelia afzelii).